Consider the following 483-residue polypeptide: Regulatory protein ViaA (483 aa).

The protein belongs to the ViaA family. In terms of assembly, homodimer. Interacts with RavA.

Its subcellular location is the cytoplasm. Functionally, component of the RavA-ViaA chaperone complex, which may act on the membrane to optimize the function of some of the respiratory chains. ViaA stimulates the ATPase activity of RavA. The polypeptide is Regulatory protein ViaA (Escherichia coli O139:H28 (strain E24377A / ETEC)).